The following is a 295-amino-acid chain: Methylamine utilization protein MauJ (295 aa).

The protein operates within one-carbon metabolism; methylamine degradation. This Methylorubrum extorquens (strain ATCC 14718 / DSM 1338 / JCM 2805 / NCIMB 9133 / AM1) (Methylobacterium extorquens) protein is Methylamine utilization protein MauJ (mauJ).